Reading from the N-terminus, the 122-residue chain is Large ribosomal subunit protein uL14 (122 aa).

This sequence belongs to the universal ribosomal protein uL14 family. As to quaternary structure, part of the 50S ribosomal subunit. Forms a cluster with proteins L3 and L19. In the 70S ribosome, L14 and L19 interact and together make contacts with the 16S rRNA in bridges B5 and B8.

Its function is as follows. Binds to 23S rRNA. Forms part of two intersubunit bridges in the 70S ribosome. The protein is Large ribosomal subunit protein uL14 of Cereibacter sphaeroides (strain ATCC 17029 / ATH 2.4.9) (Rhodobacter sphaeroides).